Consider the following 611-residue polypeptide: Elongation factor 4 (611 aa).

The region spanning 12-194 (SRIRNFSIIA…QIVEKVPAPA (183 aa)) is the tr-type G domain. Residues 24-29 (DHGKST) and 141-144 (NKID) contribute to the GTP site.

Belongs to the TRAFAC class translation factor GTPase superfamily. Classic translation factor GTPase family. LepA subfamily.

It is found in the cell membrane. It carries out the reaction GTP + H2O = GDP + phosphate + H(+). Required for accurate and efficient protein synthesis under certain stress conditions. May act as a fidelity factor of the translation reaction, by catalyzing a one-codon backward translocation of tRNAs on improperly translocated ribosomes. Back-translocation proceeds from a post-translocation (POST) complex to a pre-translocation (PRE) complex, thus giving elongation factor G a second chance to translocate the tRNAs correctly. Binds to ribosomes in a GTP-dependent manner. In Bacillus velezensis (strain DSM 23117 / BGSC 10A6 / LMG 26770 / FZB42) (Bacillus amyloliquefaciens subsp. plantarum), this protein is Elongation factor 4.